The primary structure comprises 141 residues: Large ribosomal subunit protein uL11 (141 aa).

The protein belongs to the universal ribosomal protein uL11 family. As to quaternary structure, part of the ribosomal stalk of the 50S ribosomal subunit. Interacts with L10 and the large rRNA to form the base of the stalk. L10 forms an elongated spine to which L12 dimers bind in a sequential fashion forming a multimeric L10(L12)X complex. One or more lysine residues are methylated.

In terms of biological role, forms part of the ribosomal stalk which helps the ribosome interact with GTP-bound translation factors. This is Large ribosomal subunit protein uL11 from Campylobacter jejuni subsp. jejuni serotype O:6 (strain 81116 / NCTC 11828).